We begin with the raw amino-acid sequence, 263 residues long: tRNA (guanine-N(1)-)-methyltransferase (263 aa).

Residues G113 and 137-142 (LGDYVL) contribute to the S-adenosyl-L-methionine site.

This sequence belongs to the RNA methyltransferase TrmD family. Homodimer.

The protein localises to the cytoplasm. It carries out the reaction guanosine(37) in tRNA + S-adenosyl-L-methionine = N(1)-methylguanosine(37) in tRNA + S-adenosyl-L-homocysteine + H(+). Its function is as follows. Specifically methylates guanosine-37 in various tRNAs. This is tRNA (guanine-N(1)-)-methyltransferase from Renibacterium salmoninarum (strain ATCC 33209 / DSM 20767 / JCM 11484 / NBRC 15589 / NCIMB 2235).